A 238-amino-acid polypeptide reads, in one-letter code: UDP-2,3-diacylglucosamine hydrolase (238 aa).

Residues Asp-8, His-10, Asp-41, Asn-78, and His-113 each coordinate Mn(2+). 78–79 (NR) provides a ligand contact to substrate. Residues Asp-121, Ser-159, Asn-163, Lys-166, and His-194 each contribute to the substrate site. Positions 194 and 196 each coordinate Mn(2+).

It belongs to the LpxH family. Mn(2+) is required as a cofactor.

The protein localises to the cell inner membrane. The enzyme catalyses UDP-2-N,3-O-bis[(3R)-3-hydroxytetradecanoyl]-alpha-D-glucosamine + H2O = 2-N,3-O-bis[(3R)-3-hydroxytetradecanoyl]-alpha-D-glucosaminyl 1-phosphate + UMP + 2 H(+). It functions in the pathway glycolipid biosynthesis; lipid IV(A) biosynthesis; lipid IV(A) from (3R)-3-hydroxytetradecanoyl-[acyl-carrier-protein] and UDP-N-acetyl-alpha-D-glucosamine: step 4/6. Functionally, hydrolyzes the pyrophosphate bond of UDP-2,3-diacylglucosamine to yield 2,3-diacylglucosamine 1-phosphate (lipid X) and UMP by catalyzing the attack of water at the alpha-P atom. Involved in the biosynthesis of lipid A, a phosphorylated glycolipid that anchors the lipopolysaccharide to the outer membrane of the cell. The chain is UDP-2,3-diacylglucosamine hydrolase from Shewanella pealeana (strain ATCC 700345 / ANG-SQ1).